The following is a 406-amino-acid chain: Exo-alpha-sialidase (406 aa).

Positions 1–20 (MQSMRFMILALLVQFLPAWA) are cleaved as a signal peptide. Substrate-binding residues include Arg-59, Arg-78, Asp-84, and Gln-148. An N-linked (GlcNAc...) asparagine glycan is attached at Asn-235. Substrate is bound by residues Arg-265, Arg-322, 322–323 (RR), 331–332 (YD), Lys-337, Tyr-358, Asp-376, and 376–378 (DFF). An N-linked (GlcNAc...) asparagine glycan is attached at Asn-396.

Belongs to the glycosyl hydrolase 33 family.

It catalyses the reaction Hydrolysis of alpha-(2-&gt;3)-, alpha-(2-&gt;6)-, alpha-(2-&gt;8)- glycosidic linkages of terminal sialic acid residues in oligosaccharides, glycoproteins, glycolipids, colominic acid and synthetic substrates.. Its function is as follows. Sialidase is able to release sialic acid from a wide variety of natural substrates including bovine salivary mucin, colominic acid, bovine fetuin, a serum glycoprotein containing both alpha-2-6 and alpha-2-3-linkages in a ratio of about 3:2, and glycoproteins and glycolipids from thermally denatured human lung epithelial cells. Does not show any trans-sialidase activity since it is able to remove terminal sialic acid residues but is unable to catalyze their transfer to the acceptor substrate. 2-keto-3-deoxynononic acid (KDN) is the preferred substrate and A.fumigatus can utilize KDN as a sole carbon source. The sequence is that of Exo-alpha-sialidase from Aspergillus fumigatus (strain ATCC MYA-4609 / CBS 101355 / FGSC A1100 / Af293) (Neosartorya fumigata).